A 96-amino-acid chain; its full sequence is Aspartyl/glutamyl-tRNA(Asn/Gln) amidotransferase subunit C (96 aa).

It belongs to the GatC family. As to quaternary structure, heterotrimer of A, B and C subunits.

It catalyses the reaction L-glutamyl-tRNA(Gln) + L-glutamine + ATP + H2O = L-glutaminyl-tRNA(Gln) + L-glutamate + ADP + phosphate + H(+). The enzyme catalyses L-aspartyl-tRNA(Asn) + L-glutamine + ATP + H2O = L-asparaginyl-tRNA(Asn) + L-glutamate + ADP + phosphate + 2 H(+). Functionally, allows the formation of correctly charged Asn-tRNA(Asn) or Gln-tRNA(Gln) through the transamidation of misacylated Asp-tRNA(Asn) or Glu-tRNA(Gln) in organisms which lack either or both of asparaginyl-tRNA or glutaminyl-tRNA synthetases. The reaction takes place in the presence of glutamine and ATP through an activated phospho-Asp-tRNA(Asn) or phospho-Glu-tRNA(Gln). The sequence is that of Aspartyl/glutamyl-tRNA(Asn/Gln) amidotransferase subunit C from Sulfurimonas denitrificans (strain ATCC 33889 / DSM 1251) (Thiomicrospira denitrificans (strain ATCC 33889 / DSM 1251)).